The primary structure comprises 418 residues: Hepatic and glial cell adhesion molecule (418 aa).

A signal peptide spans 1–33 (MKRERGALSRASRALRLSPFVYLLLIQPVPLEG). The region spanning 34–142 (VNITSPVRLI…GEKTINLTVD (109 aa)) is the Ig-like V-type domain. Residues 34 to 240 (VNITSPVRLI…VKITVYRRSS (207 aa)) are Extracellular-facing. 4 N-linked (GlcNAc...) asparagine glycosylation sites follow: asparagine 35, asparagine 138, asparagine 167, and asparagine 189. The 87-residue stretch at 148-234 (PQVLVASTTV…QVRSLPVKIT (87 aa)) folds into the Ig-like C2-type domain. A disulfide bond links cysteine 168 and cysteine 217. Residues 241-261 (LYIILSTGGIFLLVTLVTVCA) traverse the membrane as a helical segment. Residues 262-418 (CWKPSKKSRK…DESGQVEISA (157 aa)) lie on the Cytoplasmic side of the membrane. Positions 271 to 418 (KKRKLEKQNS…DESGQVEISA (148 aa)) are disordered. The residue at position 280 (serine 280) is a Phosphoserine. The span at 287-308 (NDDRLKSEADTLPRSGEQERKN) shows a compositional bias: basic and acidic residues. 3 positions are modified to phosphoserine: serine 321, serine 352, and serine 379. A compositionally biased stretch (low complexity) spans 341 to 358 (GYSVSPPVPGRSPGLPIR). The span at 385–396 (SSPGRSRSSSRS) shows a compositional bias: low complexity.

In terms of assembly, homodimer. Dimer formation occurs predominantly through cis interactions on the cell surface. Part of a complex containing MLC1, TRPV4, AQP4 and ATP1B1. Interacts with CLCN2. N-glycosylated.

The protein localises to the cytoplasm. It localises to the cell membrane. Its function is as follows. Involved in regulating cell motility and cell-matrix interactions. May inhibit cell growth through suppression of cell proliferation. In glia, associates and targets CLCN2 at astrocytic processes and myelinated fiber tracts where it may regulate transcellular chloride flux involved in neuron excitability. This is Hepatic and glial cell adhesion molecule from Mus musculus (Mouse).